Here is a 252-residue protein sequence, read N- to C-terminus: Imidazole glycerol phosphate synthase subunit HisF (252 aa).

Active-site residues include Asp11 and Asp130.

This sequence belongs to the HisA/HisF family. Heterodimer of HisH and HisF.

It is found in the cytoplasm. It catalyses the reaction 5-[(5-phospho-1-deoxy-D-ribulos-1-ylimino)methylamino]-1-(5-phospho-beta-D-ribosyl)imidazole-4-carboxamide + L-glutamine = D-erythro-1-(imidazol-4-yl)glycerol 3-phosphate + 5-amino-1-(5-phospho-beta-D-ribosyl)imidazole-4-carboxamide + L-glutamate + H(+). Its pathway is amino-acid biosynthesis; L-histidine biosynthesis; L-histidine from 5-phospho-alpha-D-ribose 1-diphosphate: step 5/9. IGPS catalyzes the conversion of PRFAR and glutamine to IGP, AICAR and glutamate. The HisF subunit catalyzes the cyclization activity that produces IGP and AICAR from PRFAR using the ammonia provided by the HisH subunit. In Hydrogenobaculum sp. (strain Y04AAS1), this protein is Imidazole glycerol phosphate synthase subunit HisF.